Reading from the N-terminus, the 104-residue chain is Replication restart protein PriB (104 aa).

The SSB domain maps to 1-101; sequence MTNRLALSGT…LHAEQIELID (101 aa).

Belongs to the PriB family. In terms of assembly, homodimer. Interacts with PriA and DnaT. Component of the replication restart primosome. Primosome assembly occurs via a 'hand-off' mechanism. PriA binds to replication forks, subsequently PriB then DnaT bind; DnaT then displaces ssDNA to generate the helicase loading substrate.

Involved in the restart of stalled replication forks, which reloads the replicative helicase on sites other than the origin of replication; the PriA-PriB pathway is the major replication restart pathway. During primosome assembly it facilitates complex formation between PriA and DnaT on DNA; stabilizes PriA on DNA. Stimulates the DNA unwinding activity of PriA helicase. The chain is Replication restart protein PriB from Salmonella agona (strain SL483).